Reading from the N-terminus, the 227-residue chain is MPTSPFIDDLIRDRRTKRGFLDQPVPIEMVKDILSVAKYTPSSSNTQPWRCYVLTGEARERVTTAAVEAYRGAPEGLKPEYSYFPEPLHEPYATRFNSFRGQLGDAEGCCRSDITGRRRYVERQFRFFDAPVGLIFTMDRRLEWASFICYGCFLQNIMLAAKGRGLDTCPQGLWSLQHPVLRTELNLPDDQMVVAGMSLGWADNSMAVNQMSMSRVELEEFTTFVHE.

Position 14–18 (Arg14–Arg18) interacts with FMN. Ser44 lines the NADP(+) pocket. Residues Gly172–Leu173 and Arg215 each bind FMN.

Belongs to the nitroreductase family. FMN serves as cofactor.

The catalysed reaction is N-phenylhydroxylamine + 2 NADP(+) + H2O = nitrobenzene + 2 NADPH + 2 H(+). It participates in xenobiotic degradation; nitrobenzene degradation. The protein operates within xenobiotic degradation; 4-chloronitrobenzene degradation. In terms of biological role, involved in the biodegradation of chlorinated nitroaromatic compounds. Catalyzes the reduction of 4-chloronitrobenzene to yield 1-hydroxylamino-4-chlorobenzene. Probably also able to catalyze the two-electron reduction of nitrobenzene (NB) to produce a nitrosobenzene (NOB) intermediate, which is immediately reduced to hydroxylaminobenzene (HAB) by a second two-electron transfer. The sequence is that of Chloronitrobenzene nitroreductase from Comamonas testosteroni (Pseudomonas testosteroni).